A 394-amino-acid chain; its full sequence is 4-hydroxybenzoate 3-monooxygenase (NAD(P)H) (394 aa).

FAD-binding positions include E32, 42-47, and Q102; that span reads TIRAGV. Substrate contacts are provided by residues Y203, 214-216, and Y224; that span reads STR. Residue D288 participates in FAD binding. Residue P295 coordinates substrate. 301 to 302 is an FAD binding site; sequence LN.

Belongs to the aromatic-ring hydroxylase family. It depends on FAD as a cofactor.

The enzyme catalyses 4-hydroxybenzoate + NADH + O2 + H(+) = 3,4-dihydroxybenzoate + NAD(+) + H2O. It catalyses the reaction 4-hydroxybenzoate + NADPH + O2 + H(+) = 3,4-dihydroxybenzoate + NADP(+) + H2O. Involved in the degradation of 4-hydroxybenzoate (4HB) via the protocatechuate (PCA) 2,3-cleavage pathway. Catalyzes the conversion of 4HB into 2-hydroxypenta-2,4-dienoate (HPD). It is highly specific for 4-hydroxybenzoate, and is able to utilize both NADH and NADPH as electron donors at approximately equal rates. This Paenibacillus sp protein is 4-hydroxybenzoate 3-monooxygenase (NAD(P)H) (praI).